The primary structure comprises 91 residues: Small ribosomal subunit protein bS18 (91 aa).

The protein belongs to the bacterial ribosomal protein bS18 family. In terms of assembly, part of the 30S ribosomal subunit. Forms a tight heterodimer with protein bS6.

Its function is as follows. Binds as a heterodimer with protein bS6 to the central domain of the 16S rRNA, where it helps stabilize the platform of the 30S subunit. This is Small ribosomal subunit protein bS18 from Burkholderia vietnamiensis (strain G4 / LMG 22486) (Burkholderia cepacia (strain R1808)).